The sequence spans 700 residues: Cap-specific mRNA (nucleoside-2'-O-)-methyltransferase 2 (700 aa).

Residues 1–21 (MSFRSSPQGKPHPMTDYQSIR) are disordered. Positions 109 to 321 (EFVTVAWCKL…VYVICLNYNK (213 aa)) constitute an Adrift-type SAM-dependent 2'-O-MTase domain. Residue Lys-117 is part of the active site. S-adenosyl-L-methionine contacts are provided by Gly-143, Trp-164, and Asp-234. Residue Asp-234 is part of the active site. Lys-274 serves as the catalytic Proton acceptor.

It is found in the nucleus. The catalysed reaction is a 5'-end (N(7)-methyl 5'-triphosphoguanosine)-(2'-O-methyl-ribonucleoside)-(ribonucleotide) in mRNA + S-adenosyl-L-methionine = a 5'-end (N(7)-methyl 5'-triphosphoguanosine)-(2'-O-methyl-ribonucleoside)-(2'-O-methyl-ribonucleotide) in mRNA + S-adenosyl-L-homocysteine + H(+). In terms of biological role, probable S-adenosyl-L-methionine-dependent methyltransferase that mediates mRNA cap2 2'-O-ribose methylation to the 5'-cap structure of mRNAs. May methylate the ribose of the second nucleotide of a m(7)GpppG-capped mRNA (cap0) to produce m(7)GpppRmpNm (cap2). Regulates expression of tracheal genes required for pathfinding on the segmental nerve. This is Cap-specific mRNA (nucleoside-2'-O-)-methyltransferase 2 (cmtr2) from Drosophila melanogaster (Fruit fly).